We begin with the raw amino-acid sequence, 461 residues long: tRNA modification GTPase MnmE (461 aa).

Positions 22, 87, and 126 each coordinate (6S)-5-formyl-5,6,7,8-tetrahydrofolate. Positions G222–I382 constitute a TrmE-type G domain. N232 contributes to the K(+) binding site. GTP contacts are provided by residues N232 to S237, T251 to T257, D276 to G279, and S363 to R365. A Mg(2+)-binding site is contributed by S236. Residues T251, I253, and T256 each contribute to the K(+) site. Position 257 (T257) interacts with Mg(2+). K461 provides a ligand contact to (6S)-5-formyl-5,6,7,8-tetrahydrofolate.

The protein belongs to the TRAFAC class TrmE-Era-EngA-EngB-Septin-like GTPase superfamily. TrmE GTPase family. In terms of assembly, homodimer. Heterotetramer of two MnmE and two MnmG subunits. K(+) is required as a cofactor.

The protein localises to the cytoplasm. In terms of biological role, exhibits a very high intrinsic GTPase hydrolysis rate. Involved in the addition of a carboxymethylaminomethyl (cmnm) group at the wobble position (U34) of certain tRNAs, forming tRNA-cmnm(5)s(2)U34. In Carboxydothermus hydrogenoformans (strain ATCC BAA-161 / DSM 6008 / Z-2901), this protein is tRNA modification GTPase MnmE.